The chain runs to 347 residues: uncharacterized protein (347 aa).

Its subcellular location is the cytoplasm. The protein localises to the nucleus. This is an uncharacterized protein from Schizosaccharomyces pombe (strain 972 / ATCC 24843) (Fission yeast).